Consider the following 1182-residue polypeptide: DNA-directed RNA polymerase subunit beta (1182 aa).

Positions 1150–1162 (DEEVEMKDEDDDN) are enriched in acidic residues. Positions 1150-1182 (DEEVEMKDEDDDNIPNATSALEQVVQPTVTEEE) are disordered. The segment covering 1171–1182 (EQVVQPTVTEEE) has biased composition (low complexity).

This sequence belongs to the RNA polymerase beta chain family. The RNAP catalytic core consists of 2 alpha, 1 beta, 1 beta' and 1 omega subunit. When a sigma factor is associated with the core the holoenzyme is formed, which can initiate transcription.

The catalysed reaction is RNA(n) + a ribonucleoside 5'-triphosphate = RNA(n+1) + diphosphate. Its function is as follows. DNA-dependent RNA polymerase catalyzes the transcription of DNA into RNA using the four ribonucleoside triphosphates as substrates. The chain is DNA-directed RNA polymerase subunit beta from Exiguobacterium sp. (strain ATCC BAA-1283 / AT1b).